The primary structure comprises 562 residues: NRAMP-like transporter smf-1 (562 aa).

Topologically, residues 1-55 are cytoplasmic; sequence MASSNNDGPIEPEAEPWRITQNDHLEQDLLEEDAESQERVDIPVDDVEKAFSFKK. A helical transmembrane segment spans residues 56–76; sequence LWAFTGPGFLMSIAYLDPGNI. Residues 77 to 83 lie on the Extracellular side of the membrane; sequence ESDLQSG. A helical transmembrane segment spans residues 84–104; it reads AQAAYKLLWVLLSAHIIGMLL. Residues 105-140 lie on the Cytoplasmic side of the membrane; that stretch reads QRMSARLGVVSGKHMAEVAYQFYPRLPRIILWLMIE. Residues 141–161 form a helical membrane-spanning segment; it reads IAIVCSDMQEVIGTAIAIFLL. Topologically, residues 162–164 are extracellular; sequence SKG. Residues 165–185 form a helical membrane-spanning segment; sequence FVPLYVGVFITILDTFTFLLI. The Cytoplasmic portion of the chain corresponds to 186–194; sequence DRYGIRKLE. Residues 195–215 form a helical membrane-spanning segment; sequence LIFGFLILTMTVSFGYEFVVV. The Extracellular segment spans residues 216–241; sequence KPPIGEVISGMVVPWCAGCGKGEFMQ. Residues 242–262 form a helical membrane-spanning segment; that stretch reads AISVVGAVIMPHNLYLHSALV. Residues 263–287 lie on the Cytoplasmic side of the membrane; that stretch reads KSRRVDRKDRRRVAEANKYFTLESA. The helical transmembrane segment at 288 to 308 threads the bilayer; sequence IALFLSFFINLFVVAVFAHGL. The Extracellular portion of the chain corresponds to 309–347; it reads YQKTNADVREMCIARHDIPDADIFPNNTEPVEVDIYKGG. N-linked (GlcNAc...) asparagine glycosylation occurs at N334. A helical transmembrane segment spans residues 348 to 368; the sequence is IYLGCQFGAIAMFIWGIGIFA. Topologically, residues 369 to 398 are cytoplasmic; that stretch reads AGQSSTMTGTYTGQFVMEGFVKIEWPKWKR. A helical transmembrane segment spans residues 399 to 419; that stretch reads VLITRAIAITPTLVLTFYSQG. The Extracellular segment spans residues 420-428; it reads VQNLTGMND. N422 is a glycosylation site (N-linked (GlcNAc...) asparagine). A helical membrane pass occupies residues 429-449; sequence FLNCVQMIQLPFALIPIITFT. The Cytoplasmic portion of the chain corresponds to 450 to 462; it reads SSRKIMHDFRSSK. Residues 463-483 form a helical membrane-spanning segment; it reads VFQIFALITSALILSINVYFI. Residues 484–496 are Extracellular-facing; that stretch reads SDYVFSRLGSEWY. The chain crosses the membrane as a helical span at residues 497 to 517; sequence IIMVLAPITFAYVLFVLYLAL. Over 518-562 the chain is Cytoplasmic; the sequence is YCLVSCEIIPDTVSIRGFSFNKSYENDAPWLAVDSSAVHDNAGYQ.

It belongs to the NRAMP family. Expressed in dopaminergic neurons (at protein level). Expressed predominantly in anterior and posterior intestine, rectal gland cell, H-shaped excretory cell, vulva cells, proximal uterus and spermatheca in adults. Weakly expressed in hyp7 hypodermis, pharyngeal muscles and some anterior sensory, ring and posterior head neurons in adults. Expressed in the anchor cell at the larval stage.

The protein resides in the apical cell membrane. It is found in the cytoplasmic vesicle membrane. Functionally, probable divalent metal ion transporter which regulates Mn(2+) uptake. In Caenorhabditis elegans, this protein is NRAMP-like transporter smf-1 (smf-1).